The sequence spans 298 residues: Probable endonuclease 4 (298 aa).

Residues His70, His111, Glu146, Asp180, His183, His215, Asp228, His230, and Glu260 each contribute to the Zn(2+) site.

The protein belongs to the AP endonuclease 2 family. It depends on Zn(2+) as a cofactor.

It catalyses the reaction Endonucleolytic cleavage to 5'-phosphooligonucleotide end-products.. Its function is as follows. Endonuclease IV plays a role in DNA repair. It cleaves phosphodiester bonds at apurinic or apyrimidinic (AP) sites, generating a 3'-hydroxyl group and a 5'-terminal sugar phosphate. The protein is Probable endonuclease 4 of Halalkalibacterium halodurans (strain ATCC BAA-125 / DSM 18197 / FERM 7344 / JCM 9153 / C-125) (Bacillus halodurans).